The sequence spans 171 residues: Anthrone oxygenase dmxR16 (171 aa).

The next 3 helical transmembrane spans lie at 21 to 41 (VIAA…ISMI), 67 to 87 (GHII…FSAL), and 96 to 116 (YALA…FMTP). N-linked (GlcNAc...) asparagine glycans are attached at residues N118 and N129. The chain crosses the membrane as a helical span at residues 145–165 (WLHATRSMFPLIGAILGFTGI).

It belongs to the anthrone oxygenase family.

Its subcellular location is the membrane. The catalysed reaction is emodin anthrone + O2 = emodin + H2O + H(+). The protein operates within secondary metabolite biosynthesis. Anthrone oxygenase; part of the gene cluster that mediates the biosynthesis of the dimeric xanthones cryptosporioptides. The pathway begins with the synthesis of atrochrysone thioester by the polyketide synthase dmx-nrPKS. The atrochrysone carboxyl ACP thioesterase dmxR1 then breaks the thioester bond and releases the atrochrysone carboxylic acid from dmx-nrPKS. Atrochrysone carboxylic acid is decarboxylated by the decarboxylase dmxR15, and oxidized by the anthrone oxygenase dmxR16 to yield emodin. Emodin is then reduced to emodin hydroquinone by the oxidoreductase dmxR7. A-ring reduction by the short chain dehydrogenase dmxR18, dehydration by the scytalone dehydratase-like protein dmxR17 and probable spontaneous re-oxidation, results in overall deoxygenation to chrysophanol. Baeyer-Villiger oxidation by the Baeyer-Villiger monooxygenase (BVMO) dmxR6 then yields monodictylactone in equilibrium with monodictyphenone. In the case of the cryptosporioptides biosynthesis, monodictylactone is reduced at C-12 to an alcohol (by the short chain dehydrogenases dmxR12 or dmxR8) and hydroxylated at C-5 by dmxR9, yielding the electron-rich aromatic which could eliminate H(2)O to form the ortho-quinonemethide, followed by tautomerisation to paraquinone and complete the formal reduction to produce the 10-methylgroup. Conjugate addition of C-4a-OH to the resulting paraquinone by the monooxygenase dmxR10 then gives cyclohexadienone, which is then reduced at C-5 by the short chain dehydrogenase dmxR3 to give the dihydroxanthone. The 6,7-epoxide in the cryptosporioptides could be introduced by the cytochrome P450 monooxygenase dmxL3. The highly reducing PKS dmxL2 manufactures butyrate, which is further carboxylated by dmxL1 to form ethylmalonate. It is not yet clear whether the carboxylation occurs while the butyrate is attached to the ACP of dmxL2, but this unusual fungal metabolite could then be esterified to O-5 by the O-acetyltransferase dmxR13. Finally, dimerization performed by dmxR5 gives the observed dimers cryptosporioptides A, B and C as the final products of the pathway. This is Anthrone oxygenase dmxR16 from Cryptosporiopsis sp. (strain 8999).